The primary structure comprises 822 residues: Glycerol-3-phosphate acyltransferase (822 aa).

Residues 304–309 carry the HXXXXD motif motif; the sequence is CHRSHM.

Belongs to the GPAT/DAPAT family.

Its subcellular location is the cell inner membrane. It catalyses the reaction sn-glycerol 3-phosphate + an acyl-CoA = a 1-acyl-sn-glycero-3-phosphate + CoA. It functions in the pathway phospholipid metabolism; CDP-diacylglycerol biosynthesis; CDP-diacylglycerol from sn-glycerol 3-phosphate: step 1/3. The polypeptide is Glycerol-3-phosphate acyltransferase (Yersinia enterocolitica serotype O:8 / biotype 1B (strain NCTC 13174 / 8081)).